A 165-amino-acid polypeptide reads, in one-letter code: Pyruvoyl-dependent arginine decarboxylase (165 aa).

Serine 53 is subject to Pyruvic acid (Ser).

It belongs to the PdaD family. Pyruvate serves as cofactor.

It carries out the reaction L-arginine + H(+) = agmatine + CO2. This Methanococcus aeolicus (strain ATCC BAA-1280 / DSM 17508 / OCM 812 / Nankai-3) protein is Pyruvoyl-dependent arginine decarboxylase.